Here is a 222-residue protein sequence, read N- to C-terminus: Twisted gastrulation protein homolog 1 (222 aa).

The N-terminal stretch at 1 to 24 (MKSHYIVLALASLTFLLCLPVSQS) is a signal peptide. 2 N-linked (GlcNAc...) asparagine glycosylation sites follow: Asn80 and Asn146.

It belongs to the twisted gastrulation protein family. As to quaternary structure, interacts with CHRD and/or BMP4. This interaction enhances CHRD/BMP4 complex formation. Interacts with BMP7. As to expression, expressed in lymph node, liver, kidney, and lung. Expression in the kidney was stronger in the medulla than in the cortex, particularly in the cells surrounding the medullary tubules. Expressed in growth plate cartilage of long bones, ribs, and digits and to a lesser extent also in the resting zone of the epiphysis, trabecular bone, and vertebral cartilage. Expression seems to be absent from other skeletal tissues including muscle, skin, and fibroblasts.

The protein resides in the secreted. Its function is as follows. May be involved in dorsoventral axis formation. Seems to antagonize BMP signaling by forming ternary complexes with CHRD and BMPs, thereby preventing BMPs from binding to their receptors. In addition to the anti-BMP function, also has pro-BMP activity, partly mediated by cleavage and degradation of CHRD, which releases BMPs from ternary complexes. May be an important modulator of BMP-regulated cartilage development and chondrocyte differentiation. May play a role in thymocyte development. In Mus musculus (Mouse), this protein is Twisted gastrulation protein homolog 1 (Twsg1).